The sequence spans 174 residues: MRFLIAFVAILGYASASAIYPLAYGVNAGDAQAAAIDAAVAAQDHARAANEGQARAVEAAVQYNTDATRQVAEANRDLHETAYWNGVAATQNAVAAAQSQVAAANGAAAAVRAAHESGAYVTPYVAPYAGSYVNPYAASLVTPYGYGINGLGAVGSWCLRSRRLPCRCPRLVNT.

The signal sequence occupies residues 1-18; the sequence is MRFLIAFVAILGYASASA.

It is found in the secreted. The chain is Cuticle protein 1 from Lonomia obliqua (Moth).